The primary structure comprises 351 residues: UDP-N-acetylenolpyruvoylglucosamine reductase (351 aa).

The FAD-binding PCMH-type domain maps to 25–196 (HIQAQARWLL…AAVEFRLPLL (172 aa)). Arg-173 is a catalytic residue. The Proton donor role is filled by Ser-246. Residue Glu-343 is part of the active site.

The protein belongs to the MurB family. FAD serves as cofactor.

The protein localises to the cytoplasm. It carries out the reaction UDP-N-acetyl-alpha-D-muramate + NADP(+) = UDP-N-acetyl-3-O-(1-carboxyvinyl)-alpha-D-glucosamine + NADPH + H(+). Its pathway is cell wall biogenesis; peptidoglycan biosynthesis. In terms of biological role, cell wall formation. This Xylella fastidiosa (strain 9a5c) protein is UDP-N-acetylenolpyruvoylglucosamine reductase.